The sequence spans 120 residues: MAPSKDKKPKKAWSFTLDLTHPVEDGIFDSVNFEQFLKERIKVNGKTGNLGSIVHIGRLKSKITVSSEKKFSKRYLKYLTKKYLKKNNLRDWLRVVASDKETYELRYFQISQDDESESEE.

This sequence belongs to the eukaryotic ribosomal protein eL22 family.

The sequence is that of Ribosomal protein eL22-like 1 (rpl22l1) from Xenopus tropicalis (Western clawed frog).